A 131-amino-acid polypeptide reads, in one-letter code: NADPH-dependent 7-cyano-7-deazaguanine reductase (131 aa).

Cysteine 41 functions as the Thioimide intermediate in the catalytic mechanism. The active-site Proton donor is the aspartate 48. Substrate-binding positions include 63–65 (VEL) and 82–83 (HE).

This sequence belongs to the GTP cyclohydrolase I family. QueF type 1 subfamily.

It localises to the cytoplasm. The catalysed reaction is 7-aminomethyl-7-carbaguanine + 2 NADP(+) = 7-cyano-7-deazaguanine + 2 NADPH + 3 H(+). The protein operates within tRNA modification; tRNA-queuosine biosynthesis. In terms of biological role, catalyzes the NADPH-dependent reduction of 7-cyano-7-deazaguanine (preQ0) to 7-aminomethyl-7-deazaguanine (preQ1). The polypeptide is NADPH-dependent 7-cyano-7-deazaguanine reductase (Nitratiruptor sp. (strain SB155-2)).